The following is a 310-amino-acid chain: Basic salivary proline-rich protein 4 (310 aa).

The signal sequence occupies residues 1 to 16; sequence MLLILLSVALLALSSA. The segment at 14-310 is disordered; it reads SSAESSSEDV…RPAQGQQPPQ (297 aa). Repeat copies occupy residues 35-55, 56-76, 77-97, 98-118, 119-139, 140-160, 161-181, 182-202, and 203-223. The tract at residues 35–234 is 9.5 X 21 AA tandem repeats of K-P-[EQ]-[GR]-[PR]-[PR]-P-Q-G-G-N-Q-[PS]-[QH]-[RG]-[PT]-P-P-[PH]-P-G; sequence KPEGRRPQGG…PEGPPPQEGN (200 aa). A compositionally biased stretch (pro residues) spans 48–63; the sequence is QRPPPPPGKPQGPPPQ. N66, N87, and N108 each carry an N-linked (GlcNAc...) asparagine glycan. Residues 133 to 147 are compositionally biased toward pro residues; it reads GPPPTPGKPEGPPPQ. N-linked (GlcNAc...) asparagine glycans are attached at residues N150, N171, and N192. Residues 196–210 show a composition bias toward pro residues; sequence RPPPPPGKPERPPPQ. A glycan (N-linked (GlcNAc...) asparagine) is linked at N213. The span at 217 to 231 shows a compositional bias: pro residues; it reads GPPPHPGKPEGPPPQ. The 10; truncated repeat unit spans residues 224-234; that stretch reads KPEGPPPQEGN. N234 is a glycosylation site (N-linked (GlcNAc...) asparagine). The span at 258-310 shows a compositional bias: pro residues; sequence QGPPPPGKPQGPPPAGGNPQQPQAPPAGKPQGPPPPPQGGRPPRPAQGQQPPQ.

N-glycosylated. Post-translationally, proteolytically cleaved at the tripeptide Xaa-Pro-Gln, where Xaa in the P(3) position is mostly lysine. The endoprotease may be of microbial origin. Pyroglutamate formation found on at least Gln-46, Gln-48, Gln-67, Gln-88; Gln-90; Gln-193; Gln-288 Gln-214 and Gln-295, preferentially in diabetic, and head and neck cancer patients.

The protein localises to the secreted. In Homo sapiens (Human), this protein is Basic salivary proline-rich protein 4 (PRB4).